Reading from the N-terminus, the 208-residue chain is MRDTMNLIPMVVEQSARGERSFDIFSRLLRERIIFLNGQVDDNSAALVCAQMLHLEAENPKKEIAFYINSPGGVVSSGFAIYDTMQFIKCPVATLCLGTAASMGSFLLMAGERGMRVALPNASIILHQPLGGFQGQASDIERHAQNVMRHKRRMIRLYAEHCGRAEEDVERTLDRDFFMTAEDAREWGLVDHVYRRRAGDLPLIAPSS.

Serine 102 (nucleophile) is an active-site residue. The active site involves histidine 127.

The protein belongs to the peptidase S14 family. As to quaternary structure, fourteen ClpP subunits assemble into 2 heptameric rings which stack back to back to give a disk-like structure with a central cavity, resembling the structure of eukaryotic proteasomes.

The protein localises to the cytoplasm. It carries out the reaction Hydrolysis of proteins to small peptides in the presence of ATP and magnesium. alpha-casein is the usual test substrate. In the absence of ATP, only oligopeptides shorter than five residues are hydrolyzed (such as succinyl-Leu-Tyr-|-NHMec, and Leu-Tyr-Leu-|-Tyr-Trp, in which cleavage of the -Tyr-|-Leu- and -Tyr-|-Trp bonds also occurs).. Its function is as follows. Cleaves peptides in various proteins in a process that requires ATP hydrolysis. Has a chymotrypsin-like activity. Plays a major role in the degradation of misfolded proteins. This chain is ATP-dependent Clp protease proteolytic subunit 2, found in Chelativorans sp. (strain BNC1).